We begin with the raw amino-acid sequence, 262 residues long: ClpXP adapter protein SpxH (262 aa).

Belongs to the SpxH family. As to quaternary structure, interacts with Spx.

Its subcellular location is the cytoplasm. Adapter protein required for efficient degradation of Spx by ClpXP under non-stress conditions. Interaction with Spx stabilizes Spx and exposes the C-terminus of Spx for recognition and proteolysis by ClpXP. The polypeptide is ClpXP adapter protein SpxH (Staphylococcus saprophyticus subsp. saprophyticus (strain ATCC 15305 / DSM 20229 / NCIMB 8711 / NCTC 7292 / S-41)).